A 184-amino-acid polypeptide reads, in one-letter code: Tumor necrosis factor receptor superfamily member 13C (184 aa).

The Extracellular segment spans residues 1-78 (MRRGPRSLRG…EAALPLPGLL (78 aa)). A TNFR-Cys; truncated repeat occupies 18-35 (PCVPAECFDLLVRHCVAC). Intrachain disulfides connect Cys19-Cys32 and Cys24-Cys35. The interval 26–31 (DLLVRH) is essential for TNFSF13B/TALL1/BAFF/BLyS binding. Residues 43-62 (PKPAGASSPAPRTALQPQES) are disordered. Residues 79–99 (FGAPALLGLALVLALVLVGLV) traverse the membrane as a helical; Signal-anchor for type III membrane protein segment. Residues 100 to 184 (SWRRRQRRLR…TTKTAGPEQQ (85 aa)) lie on the Cytoplasmic side of the membrane. The disordered stretch occupies residues 107–184 (RLRGASSAEA…TTKTAGPEQQ (78 aa)). The span at 118 to 128 (DGDKDAPEPLD) shows a compositional bias: basic and acidic residues. The span at 168–184 (LGSTELVTTKTAGPEQQ) shows a compositional bias: polar residues.

As to expression, highly expressed in spleen and lymph node, and in resting B-cells. Detected at lower levels in activated B-cells, resting CD4+ T-cells, in thymus and peripheral blood leukocytes.

It is found in the membrane. Functionally, B-cell receptor specific for TNFSF13B/TALL1/BAFF/BLyS. Promotes the survival of mature B-cells and the B-cell response. This Homo sapiens (Human) protein is Tumor necrosis factor receptor superfamily member 13C (TNFRSF13C).